Reading from the N-terminus, the 151-residue chain is Urease accessory protein UreE (151 aa).

The protein belongs to the UreE family.

The protein resides in the cytoplasm. Involved in urease metallocenter assembly. Binds nickel. Probably functions as a nickel donor during metallocenter assembly. The polypeptide is Urease accessory protein UreE (Lachnoclostridium phytofermentans (strain ATCC 700394 / DSM 18823 / ISDg) (Clostridium phytofermentans)).